A 328-amino-acid polypeptide reads, in one-letter code: MLDPNHLFDITVIGGGPVGMFAAYYAGMRKADVQIIESLPELGGQVATLYPEKEIFDVAGFKGITGAQLTANLAEQLAVFEPTTQLETSVKAILPQEDGTYILETSKGTTHTRGVIVAVGNGAFTPRKLAVDYQPEWENNYIHYFAKEMAQFKDQTVAVAGGGDSAIDWALMLEKVAKQVYIIHRRDQFRGLESSVDALMNSSIQIKTPFLIDGLTEVDHQLALSLNKMKSTDQEQLVVDKLLVNYGFISDTRILRDWGLTLDHHQVSVNQQMATNLPNVYAIGDIATYPGKVKLIASGFGEAPVAVTELLTKLYPEKRQPLHSTSIM.

Residues glutamate 37, glutamine 45, tyrosine 50, valine 90, phenylalanine 124, aspartate 285, and threonine 325 each contribute to the FAD site.

The protein belongs to the ferredoxin--NADP reductase type 2 family. In terms of assembly, homodimer. Requires FAD as cofactor.

The enzyme catalyses 2 reduced [2Fe-2S]-[ferredoxin] + NADP(+) + H(+) = 2 oxidized [2Fe-2S]-[ferredoxin] + NADPH. The protein is Ferredoxin--NADP reductase 2 of Latilactobacillus sakei subsp. sakei (strain 23K) (Lactobacillus sakei subsp. sakei).